Reading from the N-terminus, the 349-residue chain is N-acetyltaurine hydrolase (349 aa).

Positions 26, 28, 169, 201, 230, and 298 each coordinate a divalent metal cation.

Belongs to the metallo-dependent hydrolases superfamily. Phosphotriesterase family. A divalent metal cation is required as a cofactor.

The protein localises to the cytoplasm. It is found in the cytosol. The catalysed reaction is N-acetyltaurine + H2O = taurine + acetate. It carries out the reaction N-propanoyltaurine + H2O = propanoate + taurine. It catalyses the reaction N-acetyl-L-methionine + H2O = L-methionine + acetate. The enzyme catalyses N-acetyl-L-isoleucine + H2O = L-isoleucine + acetate. The catalysed reaction is N-acetyl-L-leucine + H2O = L-leucine + acetate. It carries out the reaction N-acetyl-L-valine + H2O = L-valine + acetate. Functionally, N-acetyltaurine hydrolase that catalyzes the hydrolysis of N-acetyltaurine into taurine and acetate. PTER also acts on other N-acetyl amino acids (Met, Ile, Leu, Val) and N-propionyltaurine, but at lower rates. The sequence is that of N-acetyltaurine hydrolase (pter) from Tetraodon nigroviridis (Spotted green pufferfish).